We begin with the raw amino-acid sequence, 506 residues long: Dolichyl pyrophosphate Glc1Man9GlcNAc2 alpha-1,3-glucosyltransferase (506 aa).

The next 12 helical transmembrane spans lie at 10 to 30 (RLLL…IPSS), 101 to 121 (VIYF…YGVY), 133 to 153 (NLIC…HIHF), 176 to 196 (LLGG…AVTA), 219 to 239 (LVTI…PFIY), 261 to 281 (YWAP…AVLL), 305 to 325 (PFAV…LLAI), 339 to 359 (GLVA…GWHV), 384 to 401 (HYFL…PLLY), 406 to 426 (YPIK…GFAA), 454 to 474 (YLMG…YFLG), and 479 to 499 (FLPL…SWIW).

The protein belongs to the ALG6/ALG8 glucosyltransferase family.

It is found in the endoplasmic reticulum membrane. It carries out the reaction an alpha-D-Glc-(1-&gt;3)-alpha-D-Man-(1-&gt;2)-alpha-D-Man-(1-&gt;2)-alpha-D-Man-(1-&gt;3)-[alpha-D-Man-(1-&gt;2)-alpha-D-Man-(1-&gt;3)-[alpha-D-Man-(1-&gt;2)-alpha-D-Man-(1-&gt;6)]-alpha-D-Man-(1-&gt;6)]-beta-D-Man-(1-&gt;4)-beta-D-GlcNAc-(1-&gt;4)-alpha-D-GlcNAc-diphospho-di-trans,poly-cis-dolichol + a di-trans,poly-cis-dolichyl beta-D-glucosyl phosphate = an alpha-D-Glc-(1-&gt;3)-alpha-D-Glc-(1-&gt;3)-alpha-D-Man-(1-&gt;2)-alpha-D-Man-(1-&gt;2)-alpha-D-Man-(1-&gt;3)-[alpha-D-Man-(1-&gt;2)-alpha-D-Man-(1-&gt;3)-[alpha-D-Man-(1-&gt;2)-alpha-D-Man-(1-&gt;6)]-alpha-D-Man-(1-&gt;6)]-beta-D-Man-(1-&gt;4)-beta-D-GlcNAc-(1-&gt;4)-alpha-D-GlcNAc-diphospho-di-trans,poly-cis-dolichol + a di-trans,poly-cis-dolichyl phosphate + H(+). It participates in protein modification; protein glycosylation. Functionally, dolichyl pyrophosphate Glc1Man9GlcNAc2 alpha-1,3-glucosyltransferase that operates in the biosynthetic pathway of dolichol-linked oligosaccharides, the glycan precursors employed in protein asparagine (N)-glycosylation. The assembly of dolichol-linked oligosaccharides begins on the cytosolic side of the endoplasmic reticulum membrane and finishes in its lumen. The sequential addition of sugars to dolichol pyrophosphate produces dolichol-linked oligosaccharides containing fourteen sugars, including two GlcNAcs, nine mannoses and three glucoses. Once assembled, the oligosaccharide is transferred from the lipid to nascent proteins by oligosaccharyltransferases. In the lumen of the endoplasmic reticulum, adds the second glucose residue from dolichyl phosphate glucose (Dol-P-Glc) onto the lipid-linked oligosaccharide intermediate Glc(1)Man(9)GlcNAc(2)-PP-Dol to produce Glc(2)Man(9)GlcNAc(2)-PP-Dol. The sequence is that of Dolichyl pyrophosphate Glc1Man9GlcNAc2 alpha-1,3-glucosyltransferase from Arabidopsis thaliana (Mouse-ear cress).